Consider the following 195-residue polypeptide: Guanylate kinase (195 aa).

The Guanylate kinase-like domain maps to 5–183 (GILFVISGPS…ALQKITAIII (179 aa)). Position 12-19 (12-19 (GPSGVGKG)) interacts with ATP.

This sequence belongs to the guanylate kinase family.

The protein localises to the cytoplasm. It catalyses the reaction GMP + ATP = GDP + ADP. Functionally, essential for recycling GMP and indirectly, cGMP. This chain is Guanylate kinase, found in Syntrophomonas wolfei subsp. wolfei (strain DSM 2245B / Goettingen).